The sequence spans 382 residues: Heme A synthase (382 aa).

8 consecutive transmembrane segments (helical) span residues 25–45, 112–132, 138–158, 176–196, 211–231, 270–290, 303–323, and 327–347; these read GAVR…VAVG, LLGR…WARG, LLLG…IGWI, LALH…LAAG, VVAG…GLVA, LALV…VAIA, AAAG…GLGI, and LLHV…AVLI. A heme-binding site is contributed by H277. A heme-binding site is contributed by H338.

It belongs to the COX15/CtaA family. Type 2 subfamily. In terms of assembly, interacts with CtaB. The cofactor is heme b.

It is found in the cell membrane. The catalysed reaction is Fe(II)-heme o + 2 A + H2O = Fe(II)-heme a + 2 AH2. It participates in porphyrin-containing compound metabolism; heme A biosynthesis; heme A from heme O: step 1/1. Its function is as follows. Catalyzes the conversion of heme O to heme A by two successive hydroxylations of the methyl group at C8. The first hydroxylation forms heme I, the second hydroxylation results in an unstable dihydroxymethyl group, which spontaneously dehydrates, resulting in the formyl group of heme A. This is Heme A synthase from Methylorubrum extorquens (strain PA1) (Methylobacterium extorquens).